A 130-amino-acid chain; its full sequence is MSKTIKRIGSRRNEHRVLKGVIYVQASFNNTIVTATDVRGQVLSWSSAGACGFKGTRRGTPFAAQTAAENVIRALMDRGMERVEVMISGPGRGRDTALRTIRRSGILLSFVRDVTPMPHNGCRPPKKRRV.

The protein belongs to the universal ribosomal protein uS11 family. In terms of assembly, part of the 30S ribosomal subunit.

The protein resides in the plastid. The protein localises to the chloroplast. The polypeptide is Small ribosomal subunit protein uS11c (Pinus thunbergii (Japanese black pine)).